Here is a 342-residue protein sequence, read N- to C-terminus: S-adenosylmethionine:tRNA ribosyltransferase-isomerase (342 aa).

This sequence belongs to the QueA family. Monomer.

The protein localises to the cytoplasm. It catalyses the reaction 7-aminomethyl-7-carbaguanosine(34) in tRNA + S-adenosyl-L-methionine = epoxyqueuosine(34) in tRNA + adenine + L-methionine + 2 H(+). It participates in tRNA modification; tRNA-queuosine biosynthesis. In terms of biological role, transfers and isomerizes the ribose moiety from AdoMet to the 7-aminomethyl group of 7-deazaguanine (preQ1-tRNA) to give epoxyqueuosine (oQ-tRNA). In Streptococcus pyogenes serotype M6 (strain ATCC BAA-946 / MGAS10394), this protein is S-adenosylmethionine:tRNA ribosyltransferase-isomerase.